A 61-amino-acid chain; its full sequence is UPF0391 membrane protein Pnap_0032 (61 aa).

A run of 2 helical transmembrane segments spans residues 5–25 (AIIF…GVAA) and 33–53 (VLFG…ALGV).

Belongs to the UPF0391 family.

It localises to the cell membrane. In Polaromonas naphthalenivorans (strain CJ2), this protein is UPF0391 membrane protein Pnap_0032.